Here is a 132-residue protein sequence, read N- to C-terminus: Glycerol-3-phosphate cytidylyltransferase (132 aa).

CTP contacts are provided by residues 9-10 (TY) and 14-17 (HYGH). Lys44 contributes to the substrate binding site. CTP is bound at residue Lys46. Residue Lys77 coordinates substrate. 113 to 120 (RTEGISTT) provides a ligand contact to CTP.

This sequence belongs to the cytidylyltransferase family. In terms of assembly, homotetramer or homodimer.

Its subcellular location is the cytoplasm. It catalyses the reaction sn-glycerol 3-phosphate + CTP + H(+) = CDP-glycerol + diphosphate. It participates in cell wall biogenesis; poly(ribitol phosphate) teichoic acid biosynthesis. In terms of biological role, catalyzes the transfer of the cytidylyl group of CTP to sn-glycerol 3-phosphate so the activated glycerol 3-phosphate can be used for teichoic acid synthesis, via incorporation into both the linkage unit by TarB and TarF. The sequence is that of Glycerol-3-phosphate cytidylyltransferase from Staphylococcus aureus (strain NCTC 8325 / PS 47).